The following is a 760-amino-acid chain: Probable myosin-binding protein 4 (760 aa).

The chain crosses the membrane as a helical span at residues 26-46 (WFLILLMFIDALLSYLLVWFA). Disordered stretches follow at residues 161-189 (SRGR…SLKK), 247-273 (SEKR…QPVL), 292-311 (SMLG…VKAK), and 348-595 (EAEV…KHSA). Residues 352–366 (SGSSSPSGGEFLSPS) are compositionally biased toward low complexity. Positions 371–383 (ASREIRIQEHDDS) are enriched in basic and acidic residues. Residues 385-394 (DFSQNITSSA) show a composition bias toward polar residues. Positions 388–416 (QNITSSAMEIEEFEAAIEQKESDHMDVSG) form a coiled coil. Residues 404–413 (IEQKESDHMD) show a composition bias toward basic and acidic residues. 2 stretches are compositionally biased toward acidic residues: residues 446–458 (LEQE…ESEV) and 517–526 (EEDVDNEESE). Composition is skewed to basic and acidic residues over residues 537–550 (VKEE…HGDH) and 562–580 (SKEE…KITE). A GTD-binding domain is found at 611 to 709 (SLVEVLKQQL…DLEMELEYYR (99 aa)). The interval 725–760 (GILGNTEETNVTSPTDETSIKDSTDTKLTGSPSAEN) is disordered. Composition is skewed to polar residues over residues 730–741 (TEETNVTSPTDE) and 750–760 (TKLTGSPSAEN).

The protein localises to the endomembrane system. Membrane-anchored myosin receptors that define a distinct, plant-specific transport vesicle compartment. This is Probable myosin-binding protein 4 from Arabidopsis thaliana (Mouse-ear cress).